Here is a 499-residue protein sequence, read N- to C-terminus: 6-hydroxynicotinate reductase (499 aa).

4Fe-4S ferredoxin-type domains follow at residues 1 to 29 (MFKIDEEKCKKCRMCVKECPVHAVYYEKK) and 31 to 61 (KGAIVEITEKCVECGICKRVCKFGAIENDAP). [4Fe-4S] cluster contacts are provided by cysteine 9, cysteine 12, cysteine 15, cysteine 19, cysteine 41, cysteine 44, cysteine 47, and cysteine 51.

In terms of assembly, homotetramer. Requires an oxidized flavin as cofactor. It depends on [2Fe-2S] cluster as a cofactor. [4Fe-4S] cluster is required as a cofactor.

The enzyme catalyses 1,4,5,6-tetrahydro-6-oxonicotinate + oxidized 2[4Fe-4S]-[ferredoxin] = 6-hydroxynicotinate + reduced 2[4Fe-4S]-[ferredoxin] + 2 H(+). Its pathway is cofactor degradation; nicotinate degradation; propanoate and pyruvate from 6-hydroxynicotinate: step 1/8. In terms of biological role, catalyzes the reversible reduction of 6-hydroxynicotinate to 6-oxo-1,4,5,6-tetrahydronicotinate. The polypeptide is 6-hydroxynicotinate reductase (Eubacterium barkeri (Clostridium barkeri)).